The primary structure comprises 514 residues: 2,3-bisphosphoglycerate-independent phosphoglycerate mutase (514 aa).

Positions 14 and 64 each coordinate Mn(2+). Serine 64 acts as the Phosphoserine intermediate in catalysis. Substrate-binding positions include histidine 125, 155 to 156, arginine 187, arginine 193, 263 to 266, and lysine 336; these read RD and RADR. Mn(2+) is bound by residues aspartate 403, histidine 407, aspartate 444, histidine 445, and histidine 463.

It belongs to the BPG-independent phosphoglycerate mutase family. In terms of assembly, monomer. Mn(2+) is required as a cofactor.

The catalysed reaction is (2R)-2-phosphoglycerate = (2R)-3-phosphoglycerate. Its pathway is carbohydrate degradation; glycolysis; pyruvate from D-glyceraldehyde 3-phosphate: step 3/5. Its function is as follows. Catalyzes the interconversion of 2-phosphoglycerate and 3-phosphoglycerate. The polypeptide is 2,3-bisphosphoglycerate-independent phosphoglycerate mutase (Shewanella denitrificans (strain OS217 / ATCC BAA-1090 / DSM 15013)).